The primary structure comprises 160 residues: 2-C-methyl-D-erythritol 2,4-cyclodiphosphate synthase (160 aa).

Positions 10 and 12 each coordinate a divalent metal cation. 4-CDP-2-C-methyl-D-erythritol 2-phosphate contacts are provided by residues 10–12 (DVH) and 36–37 (HS). Histidine 44 lines the a divalent metal cation pocket. 4-CDP-2-C-methyl-D-erythritol 2-phosphate is bound by residues 58–60 (DIG), 63–67 (FPDTD), 102–108 (AQAPKML), 134–137 (TTTE), phenylalanine 141, and arginine 144.

The protein belongs to the IspF family. Homotrimer. A divalent metal cation serves as cofactor.

It carries out the reaction 4-CDP-2-C-methyl-D-erythritol 2-phosphate = 2-C-methyl-D-erythritol 2,4-cyclic diphosphate + CMP. It participates in isoprenoid biosynthesis; isopentenyl diphosphate biosynthesis via DXP pathway; isopentenyl diphosphate from 1-deoxy-D-xylulose 5-phosphate: step 4/6. Involved in the biosynthesis of isopentenyl diphosphate (IPP) and dimethylallyl diphosphate (DMAPP), two major building blocks of isoprenoid compounds. Catalyzes the conversion of 4-diphosphocytidyl-2-C-methyl-D-erythritol 2-phosphate (CDP-ME2P) to 2-C-methyl-D-erythritol 2,4-cyclodiphosphate (ME-CPP) with a corresponding release of cytidine 5-monophosphate (CMP). The chain is 2-C-methyl-D-erythritol 2,4-cyclodiphosphate synthase from Shewanella amazonensis (strain ATCC BAA-1098 / SB2B).